The following is a 316-amino-acid chain: Probable cell division protein WhiA (316 aa).

Positions 275–309 (TLKELGEMVSGGKISKSGINHRLRKIDEIAEKLRA) form a DNA-binding region, H-T-H motif.

The protein belongs to the WhiA family.

Functionally, involved in cell division and chromosome segregation. The chain is Probable cell division protein WhiA from Bacillus cytotoxicus (strain DSM 22905 / CIP 110041 / 391-98 / NVH 391-98).